A 207-amino-acid chain; its full sequence is uncharacterized protein (207 aa).

Glycine 51 and aspartate 72 together coordinate S-adenosyl-L-methionine.

Belongs to the methyltransferase superfamily. YrrT family.

Could be a S-adenosyl-L-methionine-dependent methyltransferase. This is an uncharacterized protein from Staphylococcus carnosus (strain TM300).